Here is a 108-residue protein sequence, read N- to C-terminus: Thioredoxin (108 aa).

A Thioredoxin domain is found at Asn2–Lys108. Cys32 and Cys35 are oxidised to a cystine.

This sequence belongs to the thioredoxin family.

Its function is as follows. Participates in various redox reactions through the reversible oxidation of its active center dithiol to a disulfide and catalyzes dithiol-disulfide exchange reactions. The sequence is that of Thioredoxin (trxA) from Buchnera aphidicola subsp. Schizaphis graminum (strain Sg).